A 71-amino-acid polypeptide reads, in one-letter code: Protein SlyX homolog (71 aa).

Belongs to the SlyX family.

This is Protein SlyX homolog from Rhodospirillum rubrum (strain ATCC 11170 / ATH 1.1.1 / DSM 467 / LMG 4362 / NCIMB 8255 / S1).